A 386-amino-acid chain; its full sequence is Succinyl-diaminopimelate desuccinylase (386 aa).

A Zn(2+)-binding site is contributed by His-77. Asp-79 is an active-site residue. Position 110 (Asp-110) interacts with Zn(2+). Glu-144 serves as the catalytic Proton acceptor. 3 residues coordinate Zn(2+): Glu-145, Glu-173, and His-359.

This sequence belongs to the peptidase M20A family. DapE subfamily. As to quaternary structure, homodimer. Requires Zn(2+) as cofactor. Co(2+) is required as a cofactor.

The catalysed reaction is N-succinyl-(2S,6S)-2,6-diaminopimelate + H2O = (2S,6S)-2,6-diaminopimelate + succinate. It participates in amino-acid biosynthesis; L-lysine biosynthesis via DAP pathway; LL-2,6-diaminopimelate from (S)-tetrahydrodipicolinate (succinylase route): step 3/3. Functionally, catalyzes the hydrolysis of N-succinyl-L,L-diaminopimelic acid (SDAP), forming succinate and LL-2,6-diaminopimelate (DAP), an intermediate involved in the bacterial biosynthesis of lysine and meso-diaminopimelic acid, an essential component of bacterial cell walls. The chain is Succinyl-diaminopimelate desuccinylase from Methylibium petroleiphilum (strain ATCC BAA-1232 / LMG 22953 / PM1).